The following is a 392-amino-acid chain: Heat-inducible transcription repressor HrcA (392 aa).

Belongs to the HrcA family.

Its function is as follows. Negative regulator of class I heat shock genes (grpE-dnaK-dnaJ and groELS operons). Prevents heat-shock induction of these operons. The chain is Heat-inducible transcription repressor HrcA from Chlamydia muridarum (strain MoPn / Nigg).